A 185-amino-acid chain; its full sequence is Mu-like prophage FluMu protein gp16 (185 aa).

To phage Mu protein gp16.

The polypeptide is Mu-like prophage FluMu protein gp16 (Haemophilus influenzae (strain ATCC 51907 / DSM 11121 / KW20 / Rd)).